Here is a 424-residue protein sequence, read N- to C-terminus: Probable serine/threonine-protein kinase PBL12 (424 aa).

One can recognise a Protein kinase domain in the interval 88–368 (FSRSNMLGEG…CEVVKVLESI (281 aa)). ATP contacts are provided by residues 94 to 102 (LGEGGFGPV) and Lys123. Asp218 serves as the catalytic Proton acceptor.

It belongs to the protein kinase superfamily. Ser/Thr protein kinase family. As to expression, expressed specifically in roots.

The protein localises to the cell membrane. It catalyses the reaction L-seryl-[protein] + ATP = O-phospho-L-seryl-[protein] + ADP + H(+). The enzyme catalyses L-threonyl-[protein] + ATP = O-phospho-L-threonyl-[protein] + ADP + H(+). May play a role in the signal transduction pathway of osmotic stress. May be involved in plant defense signaling. This chain is Probable serine/threonine-protein kinase PBL12, found in Arabidopsis thaliana (Mouse-ear cress).